A 389-amino-acid chain; its full sequence is Succinate--CoA ligase [ADP-forming] subunit beta (389 aa).

The ATP-grasp domain occupies 9-244 (KQLFEHYGLP…LTQNDAREAE (236 aa)). Residues Lys-46, 53–55 (GRG), Glu-99, Cys-102, and Glu-107 each bind ATP. Mg(2+) contacts are provided by Asn-199 and Asp-213. Substrate-binding positions include Asn-264 and 321-323 (GIV).

The protein belongs to the succinate/malate CoA ligase beta subunit family. Heterotetramer of two alpha and two beta subunits. Mg(2+) serves as cofactor.

The enzyme catalyses succinate + ATP + CoA = succinyl-CoA + ADP + phosphate. The catalysed reaction is GTP + succinate + CoA = succinyl-CoA + GDP + phosphate. Its pathway is carbohydrate metabolism; tricarboxylic acid cycle; succinate from succinyl-CoA (ligase route): step 1/1. Its function is as follows. Succinyl-CoA synthetase functions in the citric acid cycle (TCA), coupling the hydrolysis of succinyl-CoA to the synthesis of either ATP or GTP and thus represents the only step of substrate-level phosphorylation in the TCA. The beta subunit provides nucleotide specificity of the enzyme and binds the substrate succinate, while the binding sites for coenzyme A and phosphate are found in the alpha subunit. The protein is Succinate--CoA ligase [ADP-forming] subunit beta of Haemophilus influenzae (strain ATCC 51907 / DSM 11121 / KW20 / Rd).